Consider the following 114-residue polypeptide: Large ribosomal subunit protein uL22 (114 aa).

The protein belongs to the universal ribosomal protein uL22 family. In terms of assembly, part of the 50S ribosomal subunit.

In terms of biological role, this protein binds specifically to 23S rRNA; its binding is stimulated by other ribosomal proteins, e.g. L4, L17, and L20. It is important during the early stages of 50S assembly. It makes multiple contacts with different domains of the 23S rRNA in the assembled 50S subunit and ribosome. Functionally, the globular domain of the protein is located near the polypeptide exit tunnel on the outside of the subunit, while an extended beta-hairpin is found that lines the wall of the exit tunnel in the center of the 70S ribosome. In Mycoplasmopsis agalactiae (strain NCTC 10123 / CIP 59.7 / PG2) (Mycoplasma agalactiae), this protein is Large ribosomal subunit protein uL22.